Reading from the N-terminus, the 394-residue chain is DNA replication and repair protein RecF (394 aa).

30-37 (GRNGFGKT) lines the ATP pocket.

It belongs to the RecF family.

It localises to the cytoplasm. In terms of biological role, the RecF protein is involved in DNA metabolism; it is required for DNA replication and normal SOS inducibility. RecF binds preferentially to single-stranded, linear DNA. It also seems to bind ATP. This chain is DNA replication and repair protein RecF, found in Corynebacterium glutamicum (strain R).